A 722-amino-acid chain; its full sequence is WD repeat-containing and planar cell polarity effector protein fritz homolog (722 aa).

WD repeat units follow at residues 305-343 and 344-383; these read LRSKAISCCRNSTEDKLIVGCEDSSVILYEAHRGVTLLA and QAELRPSLISCHPSGAILLVGSNQGELQIFDIALSPINIQ. The interval 655–710 is disordered; that stretch reads IPNGPSSRWAIERRTEEEEEEEEEEEEELCTDSSGATTWNAEGELKEDQRKQDIGD. Over residues 671-684 the composition is skewed to acidic residues; it reads EEEEEEEEEEEELC. Positions 685–694 are enriched in polar residues; it reads TDSSGATTWN. Residues 697-708 show a composition bias toward basic and acidic residues; the sequence is GELKEDQRKQDI.

Belongs to the WD repeat fritz family. In terms of assembly, component of the CPLANE (ciliogenesis and planar polarity effectors) complex, composed of INTU, FUZ and WDPCP. Interacts with CPLANE1.

The protein resides in the cell membrane. It is found in the cytoplasm. Its subcellular location is the cytoskeleton. It localises to the cilium axoneme. The protein localises to the cilium basal body. In terms of biological role, probable effector of the planar cell polarity signaling pathway which regulates the septin cytoskeleton in both ciliogenesis and collective cell movements. Together with FUZ and WDPCP proposed to function as core component of the CPLANE (ciliogenesis and planar polarity effectors) complex involved in the recruitment of peripheral IFT-A proteins to basal bodies. Binds phosphatidylinositol 3-phosphate with highest affinity, followed by phosphatidylinositol 4-phosphate and phosphatidylinositol 5-phosphate. The chain is WD repeat-containing and planar cell polarity effector protein fritz homolog (Wdpcp) from Mus musculus (Mouse).